The primary structure comprises 442 residues: 3-phosphoshikimate 1-carboxyvinyltransferase (442 aa).

Residues Lys23, Ser24, and Arg28 each contribute to the 3-phosphoshikimate site. Lys23 provides a ligand contact to phosphoenolpyruvate. 2 residues coordinate phosphoenolpyruvate: Gly95 and Arg123. 3-phosphoshikimate contacts are provided by Ser167, Gln169, Asp315, and Lys342. Gln169 provides a ligand contact to phosphoenolpyruvate. Asp315 acts as the Proton acceptor in catalysis. Residues Arg346 and Arg390 each coordinate phosphoenolpyruvate.

It belongs to the EPSP synthase family. In terms of assembly, monomer.

The protein resides in the cytoplasm. The catalysed reaction is 3-phosphoshikimate + phosphoenolpyruvate = 5-O-(1-carboxyvinyl)-3-phosphoshikimate + phosphate. It functions in the pathway metabolic intermediate biosynthesis; chorismate biosynthesis; chorismate from D-erythrose 4-phosphate and phosphoenolpyruvate: step 6/7. Its function is as follows. Catalyzes the transfer of the enolpyruvyl moiety of phosphoenolpyruvate (PEP) to the 5-hydroxyl of shikimate-3-phosphate (S3P) to produce enolpyruvyl shikimate-3-phosphate and inorganic phosphate. This chain is 3-phosphoshikimate 1-carboxyvinyltransferase, found in Dichelobacter nodosus (strain VCS1703A).